The following is a 718-amino-acid chain: MVGIDLNTVEEEEDEEEGGATGTVTAPAEARAGGAVCLELWHACAGPVAPLPRKGSAVVYLPQGHLEHLGAAPGSGPGAAVPPHVFCRVVDVSLHADAATDEVYAQVSLVADNEEVERRMREGEDGAACDGEGEDAVKRPARIPHMFCKTLTASDTSTHGGFSVPRRAAEDCFPPLDYSLQRPFQELVAKDLHGTEWRFRHIYRGQPRRHLLTTGWSGFINKKKLVSGDAVLFLRGEDGELRLGVRRAAQLKNASPFPALHNQISNTSSLSEVAHAVAVKSIFHIYYNPRLSQSEFIIPYWKFMRSFSQPFSVGMRFKLRYESEDASERRRTGIIIGSREADPMWHGSKWKCLVVKWDDDVECRRPNGVSPWEIELSGSVSGSHLSTPHSKRLKSCFPQVNPDIVLPNGSVSSDFAESARFHKVLQGQELLGLKTRDGTVNTASQATEARNFQYTDERSCSINMSNNILGVPRLGVKTPSGNPGFSYHCSGFGESQRFQEVLQGQEVFRPYRGGTLSDACIRGSGFRQPDGNHAPGAAFKWLAPQGCDHHGITTSVLPQASSPSSVLMFPQTSSKMPGLEYIYGCLDRNENSRHFKIGPTQDMTRTDQTLRLWPHLISGKVLDECTRNEKLHSPVSGAEHESNNKCLNTNGCKIFGISLTEKAQAGDEVDCGNASYHSRLQSLKPQMPKSLGSSCATVHEQRPVVGRVVDISAVNTMI.

Positions 1–24 (MVGIDLNTVEEEEDEEEGGATGTV) are disordered. Over residues 8–18 (TVEEEEDEEEG) the composition is skewed to acidic residues. The TF-B3 DNA-binding region spans 147 to 249 (FCKTLTASDT…ELRLGVRRAA (103 aa)).

It belongs to the ARF family. In terms of assembly, homo and heterodimers. In terms of tissue distribution, expressed in roots, culms, leaves and young panicles.

Its subcellular location is the nucleus. Auxin response factors (ARFs) are transcriptional factors that bind specifically to the DNA sequence 5'-TGTCTC-3' found in the auxin-responsive promoter elements (AuxREs). The polypeptide is Auxin response factor 2 (ARF2) (Oryza sativa subsp. japonica (Rice)).